We begin with the raw amino-acid sequence, 117 residues long: Modulator protein MzrA (117 aa).

The Cytoplasmic segment spans residues 1–11 (MMTNRRFRKPS). The chain crosses the membrane as a helical span at residues 12–29 (AWRLLLLLLPLVVLLSMS). Over 30-117 (SRRLPDEVML…SNGTSPVTRS (88 aa)) the chain is Periplasmic.

The protein belongs to the MzrA family. Interacts with EnvZ.

The protein localises to the cell inner membrane. In terms of biological role, modulates the activity of the EnvZ/OmpR two-component regulatory system, probably by directly modulating EnvZ enzymatic activity and increasing stability of phosphorylated OmpR. The chain is Modulator protein MzrA from Dickeya dadantii (strain 3937) (Erwinia chrysanthemi (strain 3937)).